Reading from the N-terminus, the 61-residue chain is Small ribosomal subunit protein uS14 (61 aa).

Zn(2+) is bound by residues Cys24, Cys27, Cys40, and Cys43.

The protein belongs to the universal ribosomal protein uS14 family. Zinc-binding uS14 subfamily. Part of the 30S ribosomal subunit. Contacts proteins S3 and S10. It depends on Zn(2+) as a cofactor.

Functionally, binds 16S rRNA, required for the assembly of 30S particles and may also be responsible for determining the conformation of the 16S rRNA at the A site. The polypeptide is Small ribosomal subunit protein uS14 (Limosilactobacillus fermentum (strain NBRC 3956 / LMG 18251) (Lactobacillus fermentum)).